The following is a 133-amino-acid chain: MVDAFLGTWKLVDSKNFDDYMKSLGVGFATRQVASMTKPTTIIEKNGDILTLKTHSTFKNTEISFKLGVEFDETTADDRKVKSIVTLDGGKLVHLQKWDGQETTLVRELIDGKLILTLTHGTAVCTRTYEKEA.

Val-2 is modified (N-acetylvaline). A Phosphothreonine modification is found at Thr-8. Tyr-20 carries the post-translational modification Phosphotyrosine; by Tyr-kinases. At Ser-23 the chain carries Phosphoserine. Thr-30 bears the Phosphothreonine mark. At Ser-83 the chain carries Phosphoserine. 127 to 129 is a (9Z)-octadecenoate binding site; it reads RTY. Hexadecanoate is bound at residue 127–129; it reads RTY. Octadecanoate is bound at residue 127 to 129; the sequence is RTY.

Belongs to the calycin superfamily. Fatty-acid binding protein (FABP) family.

It localises to the cytoplasm. Its function is as follows. FABPs are thought to play a role in the intracellular transport of long-chain fatty acids and their acyl-CoA esters. The sequence is that of Fatty acid-binding protein, heart (FABP3) from Homo sapiens (Human).